The sequence spans 277 residues: Urease accessory protein UreD (277 aa).

This sequence belongs to the UreD family. As to quaternary structure, ureD, UreF and UreG form a complex that acts as a GTP-hydrolysis-dependent molecular chaperone, activating the urease apoprotein by helping to assemble the nickel containing metallocenter of UreC. The UreE protein probably delivers the nickel.

The protein localises to the cytoplasm. Required for maturation of urease via the functional incorporation of the urease nickel metallocenter. The chain is Urease accessory protein UreD from Pseudomonas putida (strain GB-1).